Consider the following 290-residue polypeptide: Putative tyrosine recombinase TTE1313 (290 aa).

Positions 1-85 (MAESVVGEFL…SIKAFYHYLF (85 aa)) constitute a Core-binding (CB) domain. A Tyr recombinase domain is found at 106–290 (KEPVTLTVEQ…EVYNKFHPRA (185 aa)). Arginine 239 is a catalytic residue. Tyrosine 283 functions as the O-(3'-phospho-DNA)-tyrosine intermediate in the catalytic mechanism.

It belongs to the 'phage' integrase family.

The protein localises to the cytoplasm. In terms of biological role, site-specific tyrosine recombinase, which acts by catalyzing the cutting and rejoining of the recombining DNA molecules. The sequence is that of Putative tyrosine recombinase TTE1313 from Caldanaerobacter subterraneus subsp. tengcongensis (strain DSM 15242 / JCM 11007 / NBRC 100824 / MB4) (Thermoanaerobacter tengcongensis).